A 435-amino-acid polypeptide reads, in one-letter code: MKAPRLGSEEVSYSDRISYLPDDLLLRILSFIHTSDAISTSLLSKRWKFVWKMMPTLDLDEDSCRNIGTLRFDEGCCMFLKSHEAPVLTSLNLKLMTPSHDIDRLLSNIKPILHEITITSYRYSTIRFPRNLNVCQTLVVMKLQDKVLVDVSFPVCFRSLKSLHLTRVKYSCRESFTTLLSACPVLEDLDLFIGRVHYDCLNSFTIWVPSLQRLSICDESYRFRSTTFEISVPSLKYLKIACQDSCFKFVEDMPNLVEAHVEANQHETKNLLRFLTSVERLKDPDLTDRIFHQLLYLELHLHKRLNGDRILSLLKHSPNLQTLKLNEKPLRSIKDQPNISVRKPNSVPECLTFHLETLEWQGYAGRPEDKEIAVYILGNALRLNTATISRYFSSSRFRHHQKKDLKIVEELKSITKASTSCQLVLQQFIEIKYSM.

The F-box domain occupies 14–60 (SDRISYLPDDLLLRILSFIHTSDAISTSLLSKRWKFVWKMMPTLDLD). The FBD domain occupies 341-390 (VRKPNSVPECLTFHLETLEWQGYAGRPEDKEIAVYILGNALRLNTATISR).

In Arabidopsis thaliana (Mouse-ear cress), this protein is Putative FBD-associated F-box protein At5g56820.